The chain runs to 369 residues: 4-hydroxy-3-methylbut-2-en-1-yl diphosphate synthase (flavodoxin) (369 aa).

Residues Cys-270, Cys-273, Cys-305, and Glu-312 each contribute to the [4Fe-4S] cluster site.

The protein belongs to the IspG family. It depends on [4Fe-4S] cluster as a cofactor.

The enzyme catalyses (2E)-4-hydroxy-3-methylbut-2-enyl diphosphate + oxidized [flavodoxin] + H2O + 2 H(+) = 2-C-methyl-D-erythritol 2,4-cyclic diphosphate + reduced [flavodoxin]. The protein operates within isoprenoid biosynthesis; isopentenyl diphosphate biosynthesis via DXP pathway; isopentenyl diphosphate from 1-deoxy-D-xylulose 5-phosphate: step 5/6. In terms of biological role, converts 2C-methyl-D-erythritol 2,4-cyclodiphosphate (ME-2,4cPP) into 1-hydroxy-2-methyl-2-(E)-butenyl 4-diphosphate. The sequence is that of 4-hydroxy-3-methylbut-2-en-1-yl diphosphate synthase (flavodoxin) from Pseudomonas fluorescens (strain SBW25).